An 834-amino-acid polypeptide reads, in one-letter code: Dual specificity calcium/calmodulin-dependent 3',5'-cyclic nucleotide phosphodiesterase 1 (834 aa).

Residues 152-338 (HSHGRDDQQQ…DELSEVQPDA (187 aa)) are disordered. Over residues 207-222 (THSGPTGPPSNTSSET) the composition is skewed to low complexity. The span at 236–252 (TVRESVMEESPSKDPGD) shows a compositional bias: basic and acidic residues. Residues 260–301 (STSTLTSQTTTSSSATAEPSAKAAESQAGSAGSSGSCSNPAA) are compositionally biased toward low complexity. Residues 313–322 (WARSMSTNKT) show a composition bias toward polar residues. The segment at 364–387 (EKPKFRSVAHAIRAGIFVDRMYRR) is calmodulin-binding. The PDEase domain occupies 392-786 (ALTAFPPDVV…RIWKEQAVKD (395 aa)). Residue H469 is the Proton donor of the active site. Zn(2+) contacts are provided by H473, H509, D510, and D617. A Mg(2+)-binding site is contributed by D510. Disordered regions lie at residues 720–744 (IVIP…AKTT) and 797–834 (EEAA…GAAA). Residues 732 to 741 (DKPRDHRTEA) show a composition bias toward basic and acidic residues. Low complexity predominate over residues 823–834 (EPAAEPADGAAA).

The protein belongs to the cyclic nucleotide phosphodiesterase family. PDE1 subfamily. Zn(2+) is required as a cofactor. Requires Mg(2+) as cofactor. Expressed in the head (at protein level). Expressed in Malpighian tubules. Expressed in neurons in the brain and ventral ganglia with male flies having higher levels of expression in the abdominal ganglia compared to female flies.

It carries out the reaction a nucleoside 3',5'-cyclic phosphate + H2O = a nucleoside 5'-phosphate + H(+). The enzyme catalyses 3',5'-cyclic GMP + H2O = GMP + H(+). The catalysed reaction is 3',5'-cyclic AMP + H2O = AMP + H(+). Its activity is regulated as follows. Type I PDE are activated by the binding of calmodulin in the presence of Ca(2+). Inhibited by zaprinast and sildenafil. Cyclic nucleotide phosphodiesterase with a dual specificity for the second messengers cAMP and cGMP, which are key regulators of many important physiological processes. Required for male fertility and male mating behavior. This chain is Dual specificity calcium/calmodulin-dependent 3',5'-cyclic nucleotide phosphodiesterase 1, found in Drosophila melanogaster (Fruit fly).